Here is a 360-residue protein sequence, read N- to C-terminus: Phospho-N-acetylmuramoyl-pentapeptide-transferase (360 aa).

The next 10 helical transmembrane spans lie at 18–38 (VFSY…FISL), 73–93 (TMGG…WADL), 94–114 (SNIY…VGFV), 134–154 (YFWQ…IAQG), 168–188 (LLPQ…VGTS), 199–219 (GLAI…AYVT), 239–259 (LVIV…FNTY), 263–283 (VFMG…IAIL), 288–308 (LVLF…ILQV), and 338–358 (VIVR…ATLK).

Belongs to the glycosyltransferase 4 family. MraY subfamily. The cofactor is Mg(2+).

The protein localises to the cell inner membrane. The catalysed reaction is UDP-N-acetyl-alpha-D-muramoyl-L-alanyl-gamma-D-glutamyl-meso-2,6-diaminopimeloyl-D-alanyl-D-alanine + di-trans,octa-cis-undecaprenyl phosphate = di-trans,octa-cis-undecaprenyl diphospho-N-acetyl-alpha-D-muramoyl-L-alanyl-D-glutamyl-meso-2,6-diaminopimeloyl-D-alanyl-D-alanine + UMP. It functions in the pathway cell wall biogenesis; peptidoglycan biosynthesis. Its function is as follows. Catalyzes the initial step of the lipid cycle reactions in the biosynthesis of the cell wall peptidoglycan: transfers peptidoglycan precursor phospho-MurNAc-pentapeptide from UDP-MurNAc-pentapeptide onto the lipid carrier undecaprenyl phosphate, yielding undecaprenyl-pyrophosphoryl-MurNAc-pentapeptide, known as lipid I. This Colwellia psychrerythraea (strain 34H / ATCC BAA-681) (Vibrio psychroerythus) protein is Phospho-N-acetylmuramoyl-pentapeptide-transferase.